Here is a 126-residue protein sequence, read N- to C-terminus: Large ribosomal subunit protein bL17 (126 aa).

Belongs to the bacterial ribosomal protein bL17 family. In terms of assembly, part of the 50S ribosomal subunit. Contacts protein L32.

This is Large ribosomal subunit protein bL17 from Lysinibacillus sphaericus (strain C3-41).